The sequence spans 685 residues: MSDAKNNLLLFFDRPSEPCFMQKGEENAVFEIPDNYYPEKYQRVSNAIGNRFGSDAGRMIPIRNIALPNLDLPMELPYNEQFSLFVPKHRKLAGRLIDIFMGMRDVEDLQSVCSYCQLRINPYMFNYCLSVAILHRPDTKGLSIPTFAESFPDKFMDPKVFRQAREVSSVVPSGARMPIVIPSNYTASDTEPEQRVAYFREDIGINLHHWHWHLVYPFDAADRAIVNKDRRGELFYYMHQQIIARYNVERMCNNLSRVRRYNNFRAAIEEGYFPKLDSTVASRAWPPRFAGTTIRDLDRPVDQIRSDVSELETWRDRFLQAIENMSVMLPNGRQLPLDEETGIDVLGNLMESSIISRNRPYYGDLHNMGHVFISYSHDPDHRHLEQFGVMGDSATAMRDPVFYRWHAYIDDIFHLYKYKLTPYGNDRLDFPNIRVSSVSIEGGGTPNTLNTLWEQSTVDLGRGMDFTPRGSVLARFTHLQHDEYNYVIEVNNTGGSSVMGMFRIFIAPTVDESGKPFSFDEQRKLMIELDKFSQGVKPGNNTIRRKSIDSSVTIPYERTFRNQADRPADPGTAGAAEFDFCGCGWPHHMLVPKGTTQGYPMVLFVMVSNWNDDRVEQDLVGSCNDAASYCGIRDRKYPDRRAMGFPFDRPAPAATTLSDFLRPNMAVRDCIVRFTDRTRQRGQQG.

Positions 1 to 51 (MSDAKNNLLLFFDRPSEPCFMQKGEENAVFEIPDNYYPEKYQRVSNAIGNR) are excised as a propeptide. N-linked (GlcNAc...) asparagine glycosylation is present at asparagine 184. Residues histidine 209, histidine 213, and histidine 239 each contribute to the Cu cation site. Asparagine 254 and asparagine 324 each carry an N-linked (GlcNAc...) asparagine glycan. Glutamate 351 acts as the Proton acceptor in catalysis. The Cu cation site is built by histidine 366, histidine 370, and histidine 406. Residues asparagine 491 and asparagine 540 are each glycosylated (N-linked (GlcNAc...) asparagine). Intrachain disulfides connect cysteine 581/cysteine 623 and cysteine 583/cysteine 630.

As to quaternary structure, heterodimer. Cu(2+) serves as cofactor. Post-translationally, the N-terminus is blocked. In terms of tissue distribution, synthesized by hemocytes and released into the hemolymph plasma.

Its subcellular location is the secreted. The catalysed reaction is 2 L-dopa + O2 = 2 L-dopaquinone + 2 H2O. It catalyses the reaction L-tyrosine + O2 = L-dopaquinone + H2O. Its function is as follows. This is a copper-containing oxidase that functions in the formation of pigments such as melanins and other polyphenolic compounds. Catalyzes the rate-limiting conversions of tyrosine to DOPA, DOPA to DOPA-quinone and possibly 5,6 dihydroxyindole to indole-5'6 quinone. The chain is Phenoloxidase subunit 1 from Bombyx mori (Silk moth).